The chain runs to 353 residues: Peroxidase C1A (353 aa).

The first 30 residues, 1-30, serve as a signal peptide directing secretion; that stretch reads MHFSSSSTLFTCITLIPLVCLILHASLSDA. At glutamine 31 the chain carries Pyrrolidone carboxylic acid. 4 disulfide bridges follow: cysteine 41/cysteine 121, cysteine 74/cysteine 79, cysteine 127/cysteine 331, and cysteine 207/cysteine 239. A glycan (N-linked (GlcNAc...) asparagine) is linked at asparagine 43. Histidine 72 functions as the Proton acceptor in the catalytic mechanism. 5 residues coordinate Ca(2+): aspartate 73, valine 76, glycine 78, aspartate 80, and serine 82. Residue asparagine 87 is glycosylated (N-linked (GlcNAc...) asparagine). Glutamate 94 contributes to the Ca(2+) binding site. Proline 169 is a binding site for substrate. Asparagine 188 carries N-linked (GlcNAc...) asparagine glycosylation. Histidine 200 serves as a coordination point for heme b. Threonine 201 contacts Ca(2+). 3 N-linked (GlcNAc...) asparagine glycosylation sites follow: asparagine 216, asparagine 228, and asparagine 244. The Ca(2+) site is built by aspartate 252, threonine 255, and aspartate 260. N-linked (GlcNAc...) asparagine glycans are attached at residues asparagine 285 and asparagine 298. The propeptide occupies 339–353; sequence LLHDMVEVVDFVSSM.

The protein belongs to the peroxidase family. Classical plant (class III) peroxidase subfamily. As to quaternary structure, monomer. It depends on Ca(2+) as a cofactor. Heme b serves as cofactor.

The protein localises to the secreted. It is found in the vacuole. It catalyses the reaction 2 a phenolic donor + H2O2 = 2 a phenolic radical donor + 2 H2O. Removal of H(2)O(2), oxidation of toxic reductants, biosynthesis and degradation of lignin, suberization, auxin catabolism, response to environmental stresses such as wounding, pathogen attack and oxidative stress. These functions might be dependent on each isozyme/isoform in each plant tissue. The polypeptide is Peroxidase C1A (PRXC1A) (Armoracia rusticana (Horseradish)).